The chain runs to 199 residues: Protein-methionine-sulfoxide reductase heme-binding subunit MsrQ (199 aa).

A run of 4 helical transmembrane segments spans residues 8–28 (IIWL…WLFW), 82–102 (LWCF…ELGI), 116–136 (PYLT…LTST), and 153–173 (VVYL…KVLS).

This sequence belongs to the MsrQ family. As to quaternary structure, heterodimer of a catalytic subunit (MsrP) and a heme-binding subunit (MsrQ). The cofactor is FMN. Heme b is required as a cofactor.

The protein resides in the cell inner membrane. In terms of biological role, part of the MsrPQ system that repairs oxidized periplasmic proteins containing methionine sulfoxide residues (Met-O), using respiratory chain electrons. Thus protects these proteins from oxidative-stress damage caused by reactive species of oxygen and chlorine generated by the host defense mechanisms. MsrPQ is essential for the maintenance of envelope integrity under bleach stress, rescuing a wide series of structurally unrelated periplasmic proteins from methionine oxidation, including the primary periplasmic chaperone SurA and the lipoprotein Pal. MsrQ provides electrons for reduction to the reductase catalytic subunit MsrP, using the quinone pool of the respiratory chain. The sequence is that of Protein-methionine-sulfoxide reductase heme-binding subunit MsrQ from Salmonella arizonae (strain ATCC BAA-731 / CDC346-86 / RSK2980).